A 424-amino-acid polypeptide reads, in one-letter code: CinA-like protein (424 aa).

It belongs to the CinA family.

The sequence is that of CinA-like protein from Shewanella pealeana (strain ATCC 700345 / ANG-SQ1).